The following is a 183-amino-acid chain: Capsid protein (183 aa).

The segment at 136–183 (NAPILSTLPETTVVRRRGRSPRRRTPSPRRRRSQSPRRRRSQSRESQC) is disordered. The segment covering 149 to 176 (VRRRGRSPRRRTPSPRRRRSQSPRRRRS) has biased composition (basic residues). 3 positions are modified to phosphoserine; by host: Ser155, Ser162, and Ser170. The 1; half-length repeat unit spans residues 155-161 (SPRRRTP). The segment at 155–177 (SPRRRTPSPRRRRSQSPRRRRSQ) is 3 X 8 AA repeats of S-P-R-R-R-[PR]-S-Q. The short motif at 158–175 (RRTPSPRRRRSQSPRRRR) is the Bipartite nuclear localization signal element. 2 consecutive repeat copies span residues 162–169 (SPRRRRSQ) and 170–177 (SPRRRRSQ). Residues 177 to 183 (QSRESQC) are RNA binding.

This sequence belongs to the orthohepadnavirus core antigen family. Homodimerizes, then multimerizes. Interacts with cytosol exposed regions of viral L glycoprotein present in the reticulum-to-Golgi compartment. Interacts with human FLNB. Phosphorylated form interacts with host importin alpha; this interaction depends on the exposure of the NLS, which itself depends upon genome maturation and/or phosphorylation of the capsid protein. Interacts with host NUP153. In terms of processing, phosphorylated by host SRPK1, SRPK2, and maybe protein kinase C or GAPDH. Phosphorylation is critical for pregenomic RNA packaging. Protein kinase C phosphorylation is stimulated by HBx protein and may play a role in transport of the viral genome to the nucleus at the late step during the viral replication cycle.

The protein resides in the virion. It localises to the host cytoplasm. Self assembles to form an icosahedral capsid. Most capsids appear to be large particles with an icosahedral symmetry of T=4 and consist of 240 copies of capsid protein, though a fraction forms smaller T=3 particles consisting of 180 capsid proteins. Entering capsids are transported along microtubules to the nucleus. Phosphorylation of the capsid is thought to induce exposure of nuclear localization signal in the C-terminal portion of the capsid protein that allows binding to the nuclear pore complex via the importin (karyopherin-) alpha and beta. Capsids are imported in intact form through the nuclear pore into the nuclear basket, where it probably binds NUP153. Only capsids that contain the mature viral genome can release the viral DNA and capsid protein into the nucleoplasm. Immature capsids get stuck in the basket. Capsids encapsulate the pre-genomic RNA and the P protein. Pre-genomic RNA is reverse-transcribed into DNA while the capsid is still in the cytoplasm. The capsid can then either be directed to the nucleus, providing more genomes for transcription, or bud through the endoplasmic reticulum to provide new virions. This is Capsid protein from Hepatitis B virus genotype D subtype ayw (isolate France/Tiollais/1979) (HBV-D).